Consider the following 309-residue polypeptide: NAD-dependent protein deacylase sirtuin-5B, mitochondrial (309 aa).

The transit peptide at 1–35 (MILLPFHTRRLVSHVYCGLKPASQNKGIALEMTRP) directs the protein to the mitochondrion. A Deacetylase sirtuin-type domain is found at 36-306 (SSNLANFREA…PPALARHETE (271 aa)). Residue 57 to 76 (GAGVSAESGVPTIIGAGGYW) coordinates NAD(+). Residues Tyr101 and Arg104 each contribute to the substrate site. Residue 139 to 142 (QNID) participates in NAD(+) binding. The active-site Proton acceptor is His157. 4 residues coordinate Zn(2+): Cys165, Cys168, Cys206, and Cys211. NAD(+) contacts are provided by residues 248-250 (GTS), 274-276 (NME), and Cys292.

This sequence belongs to the sirtuin family. Class III subfamily. Zn(2+) serves as cofactor.

Its subcellular location is the mitochondrion. It localises to the cytoplasm. The protein resides in the cytosol. It is found in the nucleus. It carries out the reaction N(6)-malonyl-L-lysyl-[protein] + NAD(+) + H2O = 2''-O-malonyl-ADP-D-ribose + nicotinamide + L-lysyl-[protein]. The catalysed reaction is N(6)-succinyl-L-lysyl-[protein] + NAD(+) + H2O = 2''-O-succinyl-ADP-D-ribose + nicotinamide + L-lysyl-[protein]. The enzyme catalyses N(6)-glutaryl-L-lysyl-[protein] + NAD(+) + H2O = 2''-O-glutaryl-ADP-D-ribose + nicotinamide + L-lysyl-[protein]. In terms of biological role, NAD-dependent lysine demalonylase, desuccinylase and deglutarylase that specifically removes malonyl, succinyl and glutaryl groups on target proteins. Has weak NAD-dependent protein deacetylase activity; however this activity may not be physiologically relevant in vivo. The sequence is that of NAD-dependent protein deacylase sirtuin-5B, mitochondrial (sirt5-b) from Xenopus laevis (African clawed frog).